A 492-amino-acid chain; its full sequence is Probable ATP-citrate synthase subunit 2 (492 aa).

Position 24 is a phosphoserine (Ser24).

This sequence in the N-terminal section; belongs to the succinate/malate CoA ligase beta subunit family. It in the C-terminal section; belongs to the succinate/malate CoA ligase alpha subunit family. As to quaternary structure, composed of two subunits.

It localises to the cytoplasm. The protein localises to the nucleus. It carries out the reaction oxaloacetate + acetyl-CoA + ADP + phosphate = citrate + ATP + CoA. ATP citrate-lyase is the primary enzyme responsible for the synthesis of cytosolic acetyl-CoA. Has a central role in de novo lipid synthesis. The chain is Probable ATP-citrate synthase subunit 2 from Schizosaccharomyces pombe (strain 972 / ATCC 24843) (Fission yeast).